Consider the following 1074-residue polypeptide: DNA annealing helicase and endonuclease ZRANB3 (1074 aa).

The Helicase ATP-binding domain maps to 46-208; that stretch reads TFALRRDGRC…FMQIEALFPQ (163 aa). Residues 46 to 481 form a DNA annealing helicase activity region; it reads TFALRRDGRC…GRKEKLQAEE (436 aa). Residue 59-66 participates in ATP binding; the sequence is DEMGLGKT. The DEAH box motif lies at 157–160; it reads DESH. Residues 325–481 form the Helicase C-terminal domain; sequence AVKDYIKMML…GRKEKLQAEE (157 aa). The PIP-box motif lies at 519–526; it reads QRDIRSFF. Ser-566 carries the post-translational modification Phosphoserine. A RanBP2-type zinc finger spans residues 617 to 647; that stretch reads FCGEGWQCAFCTYINNSVLPYCEMCENPRGG. A disordered region spans residues 659 to 719; sequence QNKNKNEKDD…RLTPQPGDEQ (61 aa). 2 stretches are compositionally biased toward basic and acidic residues: residues 662-674 and 696-711; these read NKNE…DTSK and AKSK…EDRL. The HNH domain occupies 1006–1046; sequence PGEGHFWQVDHIKPVSGGGGQCSLDNLQTLCTVCHRERTAQ. The segment at 1006–1074 is endonuclease activity; that stretch reads PGEGHFWQVD…SDITRFLVKK (69 aa). The short motif at 1069–1073 is the APIM motif element; the sequence is RFLVK.

This sequence belongs to the SNF2/RAD54 helicase family. As to quaternary structure, interacts (via PIP-box and RanBP2-type zinc finger) with PCNA (when PCNA is polyubiquitinated via 'Lys-63'-linked polyubiquitin).

The protein localises to the nucleus. It localises to the chromosome. In terms of biological role, DNA annealing helicase and endonuclease required to maintain genome stability at stalled or collapsed replication forks by facilitating fork restart and limiting inappropriate recombination that could occur during template switching events. Recruited to the sites of stalled DNA replication by polyubiquitinated PCNA and acts as a structure-specific endonuclease that cleaves the replication fork D-loop intermediate, generating an accessible 3'-OH group in the template of the leading strand, which is amenable to extension by DNA polymerase. In addition to endonuclease activity, also catalyzes the fork regression via annealing helicase activity in order to prevent disintegration of the replication fork and the formation of double-strand breaks. This Bos taurus (Bovine) protein is DNA annealing helicase and endonuclease ZRANB3 (ZRANB3).